Consider the following 768-residue polypeptide: MKLLWQAKMSSIQDWGEEVEEGAVYHVTLKRVQIQQAANKGARWLGVEGDQLPPGHTVSQYETCKIRTIKAGTLEKLVENLLTAFGDNDFTYISIFLSTYRGFASTKEVLELLLDRYGNLTSPNCEEDGSQSSSESKMVIRNAIASILRAWLDQCAEDFREPPHFPCLQKLLDYLTRMMPGSDPERRAQNLLEQFQKQEVETDNGLPNTISFSLEEEEELEGGESAEFTCFSEDLVAEQLTYMDAQLFKKVVPHHCLGCIWSRRDKKENKHLAPTIRATISQFNTLTKCVVSTILGGKELKTQQRAKIIEKWINIAHECRLLKNFSSLRAIVSALQSNSIYRLKKTWAAVPRDRMLMFEELSDIFSDHNNHLTSRELLMKEGTSKFANLDSSVKENQKRTQRRLQLQKDMGVMQGTVPYLGTFLTDLTMLDTALQDYIEGGLINFEKRRREFEVIAQIKLLQSACNSYCMTPDQKFIQWFQRQQLLTEEESYALSCEIEAAADASTTSPKPRKSMVKRLSLLFLGSDMITSPTPTKEQPKSTASGSSGESMDSVSVSSCESNHSEAEEGSITPMDTPDEPQKKLSESSSSCSSIHSMDTNSSGMSSLINPLSSPPSCNNNPKIHKRSVSVTSITSTVLPPVYNQQNEDTCIIRISVEDNNGNMYKSIMLTSQDKTPAVIQRAMLKHNLDSDPAEEYELVQVISEDKELVIPDSANVFYAMNSQVNFDFILRKKNSMEEQVKLRSRTSLTLPRTAKRGCWSNRHSKITL.

The region spanning 65 to 196 is the N-terminal Ras-GEF domain; it reads KIRTIKAGTL…RAQNLLEQFQ (132 aa). A Ras-GEF domain is found at 232-501; the sequence is SEDLVAEQLT…YALSCEIEAA (270 aa). Residue Ser-520 is modified to Phosphoserine. The disordered stretch occupies residues 528-623; sequence MITSPTPTKE…PPSCNNNPKI (96 aa). Low complexity-rich tracts occupy residues 541–561, 586–596, and 605–621; these read STAS…SCES, ESSSSCSSIHS, and SSLI…NNNP. The region spanning 648–735 is the Ras-associating domain; the sequence is DTCIIRISVE…FDFILRKKNS (88 aa).

In terms of assembly, interacts with Ras. Expressed in a wide variety of tissues with strong expression being seen in the heart, brain, kidney, spleen and testis.

Functionally, probable guanine nucleotide exchange factor. The polypeptide is Ral guanine nucleotide dissociation stimulator-like 1 (RGL1) (Homo sapiens (Human)).